A 413-amino-acid polypeptide reads, in one-letter code: MKRPNVLNLTCPAIPVVRIGFVGLGNRGILALERYMHLEGIEVKALCDLRKENIERAEHILREFGRPEAENYSEEGMWRKMCECKEIDLIYICTDWLTHTDIAVYALQQGRHVALEVPAAMSVADCWRLVDTAEETRRHCMMLENCCYDAFALTTLNMVQQGVLGEITHAEGAYIHDLRKHYFADEKAGGYHNHWIKLYSQQHTGNPYPTHGLGPVCQWMNIHRGDRMEYLVSMSSRQAGLSAYAGQVFGASSEEAAQSYEMGDVNTTLIHTAKGRTILLQYDVTTPRPYSRHQTVCGTKGFMQKYPVPCLLLDEYGKEPLSGEQFERMMEQYKHPFTAVIGEEARRKNMPNEMNYIMDYRLIHCLRNGLPLDQDVYDAAEWSCITELSERSVRQGSVPVEIPDFTRGNWKER.

NAD(+) contacts are provided by residues 26–27 (NR), Asp-48, 96–99 (WLTH), 116–117 (EV), and Asn-145. A substrate-binding site is contributed by Tyr-174. NAD(+) is bound by residues 191–195 (YHNHW) and Tyr-208. Substrate-binding positions include 208–211 (YPTH) and Tyr-290.

This sequence belongs to the Gfo/Idh/MocA family. Glycosyl hydrolase 109 subfamily. Requires NAD(+) as cofactor.

Functionally, glycosidase. The sequence is that of Glycosyl hydrolase family 109 protein 2 from Phocaeicola vulgatus (strain ATCC 8482 / DSM 1447 / JCM 5826 / CCUG 4940 / NBRC 14291 / NCTC 11154) (Bacteroides vulgatus).